The chain runs to 1338 residues: Aldehyde oxidase 1 (1338 aa).

The 88-residue stretch at Ser5–Ile92 folds into the 2Fe-2S ferredoxin-type domain. Residues Gln113 and Cys151 each coordinate Mo-molybdopterin. Residues Phe236–Lys421 enclose the FAD-binding PCMH-type domain. Residues Val264–Val271, Ala345, Ser354, His358, Asp367, and Leu411 contribute to the FAD site. Mo-molybdopterin-binding positions include Ala806–Phe807 and Met1047. A Phosphoserine modification is found at Ser1068. Residues Gly1088–Val1091, Gln1203, and Leu1268 contribute to the Mo-molybdopterin site. The active-site Proton acceptor; for azaheterocycle hydroxylase activity is the Glu1270.

The protein belongs to the xanthine dehydrogenase family. In terms of assembly, homodimer. Requires [2Fe-2S] cluster as cofactor. The cofactor is FAD. Mo-molybdopterin is required as a cofactor. In terms of tissue distribution, detected at high levels in liver, also detected in lung, kidney, lacrimal gland and olfactory mucosa.

The protein localises to the cytoplasm. It carries out the reaction an aldehyde + O2 + H2O = a carboxylate + H2O2 + H(+). The enzyme catalyses retinal + O2 + H2O = retinoate + H2O2 + H(+). Oxidase with broad substrate specificity, oxidizing aromatic azaheterocycles, such as N1-methylnicotinamide, N-methylphthalazinium and phthalazine, as well as aldehydes, such as benzaldehyde, retinal, pyridoxal, and vanillin. Plays a key role in the metabolism of xenobiotics and drugs containing aromatic azaheterocyclic substituents. Participates in the bioactivation of prodrugs such as famciclovir, catalyzing the oxidation step from 6-deoxypenciclovir to penciclovir, which is a potent antiviral agent. Is probably involved in the regulation of reactive oxygen species homeostasis. May be a prominent source of superoxide generation via the one-electron reduction of molecular oxygen. May also catalyze nitric oxide (NO) production via the reduction of nitrite to NO with NADH or aldehyde as electron donor. May play a role in adipogenesis. The protein is Aldehyde oxidase 1 (AOX1) of Macaca fascicularis (Crab-eating macaque).